A 220-amino-acid polypeptide reads, in one-letter code: Probable nicotinate-nucleotide adenylyltransferase (220 aa).

This sequence belongs to the NadD family.

The catalysed reaction is nicotinate beta-D-ribonucleotide + ATP + H(+) = deamido-NAD(+) + diphosphate. It functions in the pathway cofactor biosynthesis; NAD(+) biosynthesis; deamido-NAD(+) from nicotinate D-ribonucleotide: step 1/1. Catalyzes the reversible adenylation of nicotinate mononucleotide (NaMN) to nicotinic acid adenine dinucleotide (NaAD). The chain is Probable nicotinate-nucleotide adenylyltransferase from Saccharophagus degradans (strain 2-40 / ATCC 43961 / DSM 17024).